We begin with the raw amino-acid sequence, 253 residues long: Phosphate import ATP-binding protein PstB 1 (253 aa).

The ABC transporter domain occupies 7-248 (LTVSDLSLYY…PEKQETSDYI (242 aa)). Position 39–46 (39–46 (GPSGCGKS)) interacts with ATP.

Belongs to the ABC transporter superfamily. Phosphate importer (TC 3.A.1.7) family. The complex is composed of two ATP-binding proteins (PstB), two transmembrane proteins (PstC and PstA) and a solute-binding protein (PstS).

The protein localises to the cell membrane. The catalysed reaction is phosphate(out) + ATP + H2O = ADP + 2 phosphate(in) + H(+). Part of the ABC transporter complex PstSACB involved in phosphate import. Responsible for energy coupling to the transport system. This chain is Phosphate import ATP-binding protein PstB 1, found in Lactococcus lactis subsp. lactis (strain IL1403) (Streptococcus lactis).